Reading from the N-terminus, the 714-residue chain is BRCA1-associated RING domain protein 1 (714 aa).

The RING-type zinc finger occupies 25-63 (CPLCLKLLNRPVLLPCDHVFCDSCVHKSSQVESGCPVCK). Disordered regions lie at residues 106-165 (YKND…QDWT) and 254-283 (KAQNHQQLPKSHTEQDSKRKRDITASDAME). Basic and acidic residues predominate over residues 118-134 (KHGESEDSEMTDKDVSK). Low complexity predominate over residues 135-147 (RSGGTDSSSRDGS). 2 stretches are compositionally biased toward basic and acidic residues: residues 155 to 165 (SDPRPKHQDWT) and 264 to 283 (SHTEQDSKRKRDITASDAME). A C2HC pre-PHD-type zinc finger spans residues 331–382 (ITICGFCQSARVSEATGEMLHYSRGRPVDGDDIFRSNVIHVHSACIEWAPQV). A PHD-type zinc finger spans residues 402–451 (IKCTKCSLKGAALGCFVKSCRRSYHVPCAREISRCRWDYEDFLLLCPAHS). BRCT domains follow at residues 482–577 (EQTP…PFEI) and 598–713 (NKPK…HPVI).

As to quaternary structure, component of a DNA-protein complex on WUS and WOX5 promoters. Interacts with SYD. Forms heterodimer with BRCA1. In terms of tissue distribution, expressed in the shoot apical meristem (SAM), roots, flowers, embryos and seedlings. Mostly expressed in flowers and siliques, and, to a lower extent, in roots, rosette leaves, inflorescence and young cauline leaves.

The protein resides in the nucleus. Its function is as follows. Binds specifically to H3K4me3 regions of target genes (e.g. WUS and WOX5) promoters to repress their transcription via chromatin remodeling. Required for the shoot apical meristem (SAM) organization and maintenance, by confining WUS expression to the organizing center, and for the quiescent center (QC) development in the root apical meristem (RAM), by repressing WOX5 expression in the root proximal meristem. Plays a role in DNA repair and in cell-cycle control. Required for the repair of DNA double-strand breaks (DSBs), both natural and induced by genotoxic stress, by homologous recombination (HR). The sequence is that of BRCA1-associated RING domain protein 1 from Arabidopsis thaliana (Mouse-ear cress).